The chain runs to 273 residues: Probable ribosomal RNA small subunit methyltransferase A (273 aa).

Positions 23, 25, 50, 71, 95, and 110 each coordinate S-adenosyl-L-methionine.

It belongs to the class I-like SAM-binding methyltransferase superfamily. rRNA adenine N(6)-methyltransferase family. RsmA subfamily.

It localises to the cytoplasm. In terms of biological role, specifically dimethylates two adjacent adenosines in the loop of a conserved hairpin near the 3'-end of 16S rRNA in the 30S particle. May play a critical role in biogenesis of 30S subunits. The sequence is that of Probable ribosomal RNA small subunit methyltransferase A from Pyrococcus furiosus (strain ATCC 43587 / DSM 3638 / JCM 8422 / Vc1).